An 807-amino-acid chain; its full sequence is Glycerol-3-phosphate acyltransferase (807 aa).

The short motif at 308-313 (CHRSHM) is the HXXXXD motif element.

Belongs to the GPAT/DAPAT family.

The protein localises to the cell inner membrane. It carries out the reaction sn-glycerol 3-phosphate + an acyl-CoA = a 1-acyl-sn-glycero-3-phosphate + CoA. Its pathway is phospholipid metabolism; CDP-diacylglycerol biosynthesis; CDP-diacylglycerol from sn-glycerol 3-phosphate: step 1/3. In Shewanella putrefaciens (strain CN-32 / ATCC BAA-453), this protein is Glycerol-3-phosphate acyltransferase.